The chain runs to 515 residues: 1-pyrroline-5-carboxylate dehydrogenase (515 aa).

Residues glutamate 286 and cysteine 320 contribute to the active site.

The protein belongs to the aldehyde dehydrogenase family. RocA subfamily.

It carries out the reaction L-glutamate 5-semialdehyde + NAD(+) + H2O = L-glutamate + NADH + 2 H(+). Its pathway is amino-acid degradation; L-proline degradation into L-glutamate; L-glutamate from L-proline: step 2/2. The chain is 1-pyrroline-5-carboxylate dehydrogenase from Bacillus pumilus (strain SAFR-032).